Reading from the N-terminus, the 235-residue chain is Protein GrpE (235 aa).

A compositionally biased stretch (polar residues) spans 1–18 (MTDGNQKPDGNSGEQVTV). 2 disordered regions span residues 1 to 50 (MTDG…DAAH) and 198 to 235 (ESVD…PSGS). Residues 19–35 (TDKRRIDPETGEVRHVP) show a composition bias toward basic and acidic residues. Residues 215 to 235 (ADQGNSADTSGEQAESEPSGS) are compositionally biased toward polar residues.

Belongs to the GrpE family. In terms of assembly, homodimer.

The protein resides in the cytoplasm. Its function is as follows. Participates actively in the response to hyperosmotic and heat shock by preventing the aggregation of stress-denatured proteins, in association with DnaK and GrpE. It is the nucleotide exchange factor for DnaK and may function as a thermosensor. Unfolded proteins bind initially to DnaJ; upon interaction with the DnaJ-bound protein, DnaK hydrolyzes its bound ATP, resulting in the formation of a stable complex. GrpE releases ADP from DnaK; ATP binding to DnaK triggers the release of the substrate protein, thus completing the reaction cycle. Several rounds of ATP-dependent interactions between DnaJ, DnaK and GrpE are required for fully efficient folding. This Mycobacterium tuberculosis (strain ATCC 25177 / H37Ra) protein is Protein GrpE.